The chain runs to 691 residues: Ribonuclease J (691 aa).

Residues 1 to 89 (MTDNNHYENN…TRNYAKEELD (89 aa)) form a disordered region. Residues 1-132 (MTDNNHYENN…KIQVEHLNPH (132 aa)) are loss of region decreases protein stability, still able to interact with RhpA, but has decreased RNase activity even on ssRNA. A compositionally biased stretch (low complexity) spans 10-19 (NESNENSSEN). A compositionally biased stretch (basic and acidic residues) spans 41–57 (RENAQKNGESSHHEAPS). A compositionally biased stretch (basic residues) spans 58–82 (HHKKEHRPNKKPNNHHKQKHAKTRN). 2 positions are modified to N6-acetyllysine: K134 and K140. The Zn(2+) site is built by H208, H210, D212, H213, H277, and D299. Residues K323, K337, and K397 each carry the N6-acetyllysine modification. 500–504 (HVSGH) provides a ligand contact to substrate. An N6-acetyllysine modification is found at K511. H526 serves as a coordination point for Zn(2+). K547, K634, and K649 each carry N6-acetyllysine.

Belongs to the metallo-beta-lactamase superfamily. RNA-metabolizing metallo-beta-lactamase-like family. Bacterial RNase J subfamily. In terms of assembly, homodimer. Homotetramer; dimer of homodimers. Interacts with RNA helicase RphA, might be a member of a minimal RNA degradosome complex. The cofactor is Zn(2+). In terms of processing, acetylated on nine lysine residues. Some of the residues are acetylated by multiple different mechanisms. RimL is partially responsible for the acetylation of Lys-323, Lys-397 and Lys-649. HPB8_1270 homolog is partially responsible for the acetylation of Lys-323, Lys-397, Lys-511 and Lys-649. Acetyl-phosphate-mediated non-enzymatic acetylation pathway takes part in the acetylation of Lys-134, Lys-323, Lys-397, Lys-511 and Lys-649. Acetylation of the remaining residues Lys-140, Lys-337, Lys-547 and Lys-634 occurs by a yet undetermined mechanism. Acetylation on a number of these residues is important for growth regulation and proper cell morphology.

It is found in the cytoplasm. Catalytic activity is regulated by the balance between homodimers and homotetramers, with homotetramers being the active forms of this enzyme. Acetylation allosterically regulates the homooligomerization state and hence the catalytic activity. In terms of biological role, an RNase that has 5'-3' exoribonuclease and endoribonuclease activity. Degrades 5'-monophosphorylated ssRNA and dsRNA, considerably more active on ssRNA. Association with RhpA significantly increases the dsRNase activity. Degrades RNA substrate with hairpin structures at both ends with low activity, but presence of RhpA significantly increases the activity on this substrate. Stimulates ATPase activity of RNA helicase RhpA. Involved in stabilization of mRNA but apparently not rRNA. This Helicobacter pylori (strain B128) protein is Ribonuclease J.